The primary structure comprises 458 residues: ATP synthase subunit beta (458 aa).

Position 148–155 (148–155 (GGAGVGKT)) interacts with ATP.

Belongs to the ATPase alpha/beta chains family. As to quaternary structure, F-type ATPases have 2 components, CF(1) - the catalytic core - and CF(0) - the membrane proton channel. CF(1) has five subunits: alpha(3), beta(3), gamma(1), delta(1), epsilon(1). CF(0) has three main subunits: a(1), b(2) and c(9-12). The alpha and beta chains form an alternating ring which encloses part of the gamma chain. CF(1) is attached to CF(0) by a central stalk formed by the gamma and epsilon chains, while a peripheral stalk is formed by the delta and b chains.

The protein resides in the cell inner membrane. It catalyses the reaction ATP + H2O + 4 H(+)(in) = ADP + phosphate + 5 H(+)(out). Produces ATP from ADP in the presence of a proton gradient across the membrane. The catalytic sites are hosted primarily by the beta subunits. This is ATP synthase subunit beta from Pseudomonas entomophila (strain L48).